The following is a 949-amino-acid chain: Glycine dehydrogenase (decarboxylating) (949 aa).

K704 bears the N6-(pyridoxal phosphate)lysine mark.

This sequence belongs to the GcvP family. In terms of assembly, the glycine cleavage system is composed of four proteins: P, T, L and H. It depends on pyridoxal 5'-phosphate as a cofactor.

The enzyme catalyses N(6)-[(R)-lipoyl]-L-lysyl-[glycine-cleavage complex H protein] + glycine + H(+) = N(6)-[(R)-S(8)-aminomethyldihydrolipoyl]-L-lysyl-[glycine-cleavage complex H protein] + CO2. Functionally, the glycine cleavage system catalyzes the degradation of glycine. The P protein binds the alpha-amino group of glycine through its pyridoxal phosphate cofactor; CO(2) is released and the remaining methylamine moiety is then transferred to the lipoamide cofactor of the H protein. The sequence is that of Glycine dehydrogenase (decarboxylating) from Bacteroides fragilis (strain YCH46).